A 541-amino-acid chain; its full sequence is Chaperonin GroEL (541 aa).

ATP contacts are provided by residues 29–32 (TLGP), 86–90 (DGTTT), Gly413, 476–478 (NAA), and Asp492.

This sequence belongs to the chaperonin (HSP60) family. In terms of assembly, forms a cylinder of 14 subunits composed of two heptameric rings stacked back-to-back. Interacts with the co-chaperonin GroES.

Its subcellular location is the cytoplasm. The catalysed reaction is ATP + H2O + a folded polypeptide = ADP + phosphate + an unfolded polypeptide.. Functionally, together with its co-chaperonin GroES, plays an essential role in assisting protein folding. The GroEL-GroES system forms a nano-cage that allows encapsulation of the non-native substrate proteins and provides a physical environment optimized to promote and accelerate protein folding. The chain is Chaperonin GroEL from Rhodococcus hoagii (Corynebacterium equii).